We begin with the raw amino-acid sequence, 542 residues long: Chaperonin GroEL (542 aa).

ATP-binding positions include 29-32 (TLGP), 86-90 (DGTTT), G413, 476-478 (NAA), and D492.

It belongs to the chaperonin (HSP60) family. Forms a cylinder of 14 subunits composed of two heptameric rings stacked back-to-back. Interacts with the co-chaperonin GroES.

Its subcellular location is the cytoplasm. The catalysed reaction is ATP + H2O + a folded polypeptide = ADP + phosphate + an unfolded polypeptide.. Together with its co-chaperonin GroES, plays an essential role in assisting protein folding. The GroEL-GroES system forms a nano-cage that allows encapsulation of the non-native substrate proteins and provides a physical environment optimized to promote and accelerate protein folding. The protein is Chaperonin GroEL of Lactococcus lactis subsp. lactis (strain IL1403) (Streptococcus lactis).